Here is a 98-residue protein sequence, read N- to C-terminus: RNA-binding protein Hfq (98 aa).

Positions 11–71 (DVFLNHVRRS…ISTVMPATPV (61 aa)) constitute a Sm domain.

It belongs to the Hfq family. Homohexamer.

In terms of biological role, RNA chaperone that binds small regulatory RNA (sRNAs) and mRNAs to facilitate mRNA translational regulation in response to envelope stress, environmental stress and changes in metabolite concentrations. Also binds with high specificity to tRNAs. This chain is RNA-binding protein Hfq, found in Gluconacetobacter diazotrophicus (strain ATCC 49037 / DSM 5601 / CCUG 37298 / CIP 103539 / LMG 7603 / PAl5).